The sequence spans 335 residues: V-set and immunoglobulin domain-containing protein 1 (335 aa).

Positions 1–21 (MFPTMLKIFPILATLAGHVHG) are cleaved as a signal peptide. Positions 22-136 (VVVTVPEKTV…SQKSVIVNVL (115 aa)) constitute an Ig-like V-type domain. At 22-233 (VVVTVPEKTV…DLTSMHSDGN (212 aa)) the chain is on the extracellular side. Cystine bridges form between cysteine 43/cysteine 115 and cysteine 160/cysteine 210. The region spanning 139-226 (PSKPFCKIEG…GNSTCELDLT (88 aa)) is the Ig-like C2-type domain. A helical transmembrane segment spans residues 234 to 254 (IVAGALIGAILAAVIICAIVW). Topologically, residues 255 to 335 (VLTKKAKKKK…QKEETAGSSF (81 aa)) are cytoplasmic. Residues 266 to 335 (SSNEMQVMAQ…QKEETAGSSF (70 aa)) are disordered. The span at 268-306 (NEMQVMAQKQSNAEYAQVPNEENTPATAVLPSNATNEQP) shows a compositional bias: polar residues. The segment covering 319–335 (NDEKHEVQKEETAGSSF) has biased composition (basic and acidic residues).

Expressed in thymocytes.

The protein localises to the membrane. The chain is V-set and immunoglobulin domain-containing protein 1 (VSIG1) from Gallus gallus (Chicken).